The chain runs to 482 residues: Glycogen synthase (482 aa).

An ADP-alpha-D-glucose-binding site is contributed by K18.

Belongs to the glycosyltransferase 1 family. Bacterial/plant glycogen synthase subfamily.

It carries out the reaction [(1-&gt;4)-alpha-D-glucosyl](n) + ADP-alpha-D-glucose = [(1-&gt;4)-alpha-D-glucosyl](n+1) + ADP + H(+). It functions in the pathway glycan biosynthesis; glycogen biosynthesis. Synthesizes alpha-1,4-glucan chains using ADP-glucose. This chain is Glycogen synthase, found in Rhodopseudomonas palustris (strain HaA2).